The primary structure comprises 140 residues: UPF0134 protein MPN_094 (140 aa).

It belongs to the UPF0134 family.

The polypeptide is UPF0134 protein MPN_094 (Mycoplasma pneumoniae (strain ATCC 29342 / M129 / Subtype 1) (Mycoplasmoides pneumoniae)).